The sequence spans 81 residues: RNA-binding protein Hfq (81 aa).

One can recognise a Sm domain in the interval 10–69 (DPFLNTLRKEHVPVSIYLVNGIKLQGQVDSFDQYVILLKNTVTQMVYKHAISTIVPGRAV).

This sequence belongs to the Hfq family. As to quaternary structure, homohexamer.

RNA chaperone that binds small regulatory RNA (sRNAs) and mRNAs to facilitate mRNA translational regulation in response to envelope stress, environmental stress and changes in metabolite concentrations. Also binds with high specificity to tRNAs. The chain is RNA-binding protein Hfq from Methylobacillus flagellatus (strain ATCC 51484 / DSM 6875 / VKM B-1610 / KT).